A 203-amino-acid polypeptide reads, in one-letter code: Inositol diphosphatase DSP3 (203 aa).

A Tyrosine-protein phosphatase domain is found at 20-169 (NFSMVEDGIY…FDIVSLRQCL (150 aa)). Residues 76–88 (FGIEGKTDPPTPM) form a WPD loop important for active site topology region. Residue C112 is the Phosphocysteine intermediate of the active site.

The protein belongs to the protein-tyrosine phosphatase family. Atypical dual-specificity phosphatase Siw14-like subfamily. In terms of assembly, interacts with FLZ1. Highly expressed in roots, stems and flowers. Expressed at low levels in leaves and siliques.

It localises to the nucleus. The enzyme catalyses 5-diphospho-1D-myo-inositol 1,2,3,4,6-pentakisphosphate + H2O = 1D-myo-inositol hexakisphosphate + phosphate + H(+). It catalyses the reaction 1,5-bis(diphospho)-1D-myo-inositol 2,3,4,6-tetrakisphosphate + H2O = 1-diphospho-1D-myo-inositol 2,3,4,5,6-pentakisphosphate + phosphate + 2 H(+). It carries out the reaction 3,5-bis(diphospho)-1D-myo-inositol 1,2,4,6-tetrakisphosphate + H2O = 3-diphospho-1D-myo-inositol 1,2,4,5,6-pentakisphosphate + phosphate + 2 H(+). The catalysed reaction is 6-diphospho-1D-myo-inositol pentakisphosphate + H2O = 1D-myo-inositol hexakisphosphate + phosphate + H(+). Functionally, cleaves the beta-phosphate at the 5-position of soluble inositol pyrophosphates. Has highest activity on 5-diphosphoinositol 1,2,3,4,6-pentakisphosphate (5-InsP(7)), 1,5-bis-diphosphoinositol 2,3,4,6-tetrakisphosphate (1,5-InsP(8)) and 3,5-InsP(8). Possesses phosphotyrosine phosphatase activity in vitro. Dephosphorylates the phosphoinositides PI(3,5)P2. Hydrolyzes para-nitrophenyl phosphate and O-methylfluorescein phosphate in vitro. This is Inositol diphosphatase DSP3 from Arabidopsis thaliana (Mouse-ear cress).